A 331-amino-acid chain; its full sequence is Pantothenate kinase (331 aa).

109–116 (GSVAVGKS) provides a ligand contact to ATP.

Belongs to the prokaryotic pantothenate kinase family.

It is found in the cytoplasm. The enzyme catalyses (R)-pantothenate + ATP = (R)-4'-phosphopantothenate + ADP + H(+). Its pathway is cofactor biosynthesis; coenzyme A biosynthesis; CoA from (R)-pantothenate: step 1/5. In Rhizobium etli (strain CIAT 652), this protein is Pantothenate kinase.